The sequence spans 545 residues: Membrane protein insertase YidC (545 aa).

A helical membrane pass occupies residues 6-26; the sequence is NLLLIALLFVSFMIWQAWQTD. The disordered stretch occupies residues 31-54; it reads PVAQTTQQTSNPATGDAASSAVPA. The next 4 helical transmembrane spans lie at 342–362, 417–437, 455–475, and 496–516; these read KFIH…TFIV, LGGC…YYML, LSAQ…MFFI, and PVIF…YYIV.

This sequence belongs to the OXA1/ALB3/YidC family. Type 1 subfamily. Interacts with the Sec translocase complex via SecD. Specifically interacts with transmembrane segments of nascent integral membrane proteins during membrane integration.

The protein localises to the cell inner membrane. Functionally, required for the insertion and/or proper folding and/or complex formation of integral membrane proteins into the membrane. Involved in integration of membrane proteins that insert both dependently and independently of the Sec translocase complex, as well as at least some lipoproteins. Aids folding of multispanning membrane proteins. The polypeptide is Membrane protein insertase YidC (Serratia proteamaculans (strain 568)).